Consider the following 209-residue polypeptide: 3-dehydroquinate dehydratase (209 aa).

Residues Ser-6, 25–27, and Arg-55 contribute to the 3-dehydroquinate site; that span reads ELR. His-109 acts as the Proton donor/acceptor in catalysis. Lys-134 serves as the catalytic Schiff-base intermediate with substrate. 3-dehydroquinate is bound by residues Arg-172 and Gln-195.

It belongs to the type-I 3-dehydroquinase family. As to quaternary structure, homodimer.

The catalysed reaction is 3-dehydroquinate = 3-dehydroshikimate + H2O. The protein operates within metabolic intermediate biosynthesis; chorismate biosynthesis; chorismate from D-erythrose 4-phosphate and phosphoenolpyruvate: step 3/7. Functionally, involved in the third step of the chorismate pathway, which leads to the biosynthesis of aromatic amino acids. Catalyzes the cis-dehydration of 3-dehydroquinate (DHQ) and introduces the first double bond of the aromatic ring to yield 3-dehydroshikimate. The protein is 3-dehydroquinate dehydratase of Methanoregula boonei (strain DSM 21154 / JCM 14090 / 6A8).